Reading from the N-terminus, the 117-residue chain is Large ribosomal subunit protein bL20 (117 aa).

Belongs to the bacterial ribosomal protein bL20 family.

Functionally, binds directly to 23S ribosomal RNA and is necessary for the in vitro assembly process of the 50S ribosomal subunit. It is not involved in the protein synthesizing functions of that subunit. The sequence is that of Large ribosomal subunit protein bL20 from Magnetococcus marinus (strain ATCC BAA-1437 / JCM 17883 / MC-1).